An 857-amino-acid chain; its full sequence is Bifunctional levopimaradiene synthase, chloroplastic (857 aa).

Residues 1-33 (MALPSSSLSSQIHTGATTQCIPHFHGSLNAGTS) constitute a chloroplast transit peptide. Position 257 (Lys257) interacts with substrate. Mg(2+) is bound by residues Asp390 and Asp392. The short motif at 390–393 (DIDD) is the DXDD motif element. Lys477 lines the substrate pocket. Mg(2+) is bound by residues Asp609, Asp613, Asn753, Thr757, and Glu761. The DDXXD motif signature appears at 609–613 (DDLYD).

Belongs to the terpene synthase family. Tpsd subfamily. Mg(2+) serves as cofactor.

It is found in the plastid. The protein resides in the chloroplast. It carries out the reaction (2E,6E,10E)-geranylgeranyl diphosphate = (+)-copalyl diphosphate. It catalyses the reaction (+)-copalyl diphosphate = abieta-7,13-diene + diphosphate. The enzyme catalyses (+)-copalyl diphosphate = abieta-8(14),12-diene + diphosphate. The catalysed reaction is (+)-copalyl diphosphate = neoabietadiene + diphosphate. Its pathway is terpene metabolism; oleoresin biosynthesis. Functionally, involved in defensive oleoresin formation in conifers in response to insect attack or other injury. Involved in diterpene (C20) olefins biosynthesis. Bifunctional enzyme that catalyzes two sequential cyclizations of geranylgeranyl diphosphate (GGPP) to levopimaradiene. Levopimaradiene is the major products of the enzyme with abietadiene and neoabietadiene. No activity with farnesyl diphosphate (FPP) as substrate. This chain is Bifunctional levopimaradiene synthase, chloroplastic, found in Pinus banksiana (Jack pine).